Here is a 368-residue protein sequence, read N- to C-terminus: MNLDKLQNWLQENGMDVAYVSSPTTINYFTGFITDPEERIFKLFAFKDAEPFLFCPALNYEEAKASAWDGDVVGYLDSEDPWSKIAEEIKKRTKDYQNWAVEKNGLTVAHYQALHAQFPDSDFSKDLSDFIAHIRLFKTESELVKLRKAGEEADFAFQIGFEALRNGVTERAVVSQIEYQLKLQKGVMQTSFDTIVQAGKNAANPHQGPSMNTVQPNELVLFDLGTMHEGYASDSSRTVAYGEPTDKMREIYEVNRTAQQAAIDAAKPGMTASELDGVARKIITDAGYGEYFIHRLGHGIGMEVHEFPSIANGNDVVLEEGMCFSIEPGIYIPGFAGVRIEDCGVLTKDGFKPFTHTSKELKVLPVKE.

Mn(2+)-binding residues include aspartate 223, aspartate 234, histidine 298, glutamate 327, and glutamate 341.

The protein belongs to the peptidase M24B family. It depends on Mn(2+) as a cofactor.

It localises to the cytoplasm. The enzyme catalyses Xaa-L-Pro dipeptide + H2O = an L-alpha-amino acid + L-proline. This Lactobacillus delbrueckii subsp. lactis protein is Xaa-Pro dipeptidase (pepQ).